The following is a 201-amino-acid chain: Recombination protein RecR (201 aa).

Residues 60–75 (CSVCGNVDTSDPCTIC) form a C4-type zinc finger. Residues 83–178 (ATLIVVEDVS…RVTKLAHGVP (96 aa)) form the Toprim domain.

Belongs to the RecR family.

Its function is as follows. May play a role in DNA repair. It seems to be involved in an RecBC-independent recombinational process of DNA repair. It may act with RecF and RecO. The chain is Recombination protein RecR from Chelativorans sp. (strain BNC1).